A 197-amino-acid polypeptide reads, in one-letter code: Thymidine kinase (197 aa).

ATP is bound by residues 9–16 (SAMDAGKT) and 87–90 (DEIH). The Proton acceptor role is filled by Glu88. Zn(2+) is bound by residues Cys145, Cys147, Cys187, and His190.

It belongs to the thymidine kinase family. In terms of assembly, homotetramer.

It localises to the cytoplasm. The catalysed reaction is thymidine + ATP = dTMP + ADP + H(+). This Francisella tularensis subsp. holarctica (strain LVS) protein is Thymidine kinase.